The following is a 932-amino-acid chain: F-box protein COS111 (932 aa).

The interval 29–63 (VSAKHRPSSTGVYGHDASTVDHASRSNNNLNLTRS) is disordered. Residues 53 to 63 (RSNNNLNLTRS) are compositionally biased toward low complexity. The region spanning 146 to 193 (RKEISDLPDEVLRNILSNVKDDQRTLVNCLYVNKAFYNATKPTLYERP) is the F-box domain. Polar residues predominate over residues 346 to 358 (LSEGKSSDNGNNG). Disordered stretches follow at residues 346 to 369 (LSEG…SVSS), 389 to 450 (TLSG…SNWF), 470 to 500 (ISSK…TEPF), and 863 to 893 (SVLP…SNDP). Low complexity-rich tracts occupy residues 395 to 431 (NNSS…SQID) and 438 to 447 (TSSKSTSSTS). Polar residues predominate over residues 876 to 890 (DDTNNGENTIAQPFS).

In terms of biological role, F-box protein probably involved in ubiquitin conjugation pathway. The protein is F-box protein COS111 (COS111) of Candida glabrata (strain ATCC 2001 / BCRC 20586 / JCM 3761 / NBRC 0622 / NRRL Y-65 / CBS 138) (Yeast).